A 301-amino-acid chain; its full sequence is Probable alpha-L-glutamate ligase (301 aa).

The region spanning 104 to 287 (LQLLSRKGIG…VADEIIRFIE (184 aa)) is the ATP-grasp domain. ATP is bound by residues lysine 141, 178–179 (EF), aspartate 187, and 211–213 (RSN). Residues aspartate 248, glutamate 260, and asparagine 262 each contribute to the Mg(2+) site. Residues aspartate 248, glutamate 260, and asparagine 262 each coordinate Mn(2+).

It belongs to the RimK family. It depends on Mg(2+) as a cofactor. Mn(2+) serves as cofactor.

In Syntrophotalea carbinolica (strain DSM 2380 / NBRC 103641 / GraBd1) (Pelobacter carbinolicus), this protein is Probable alpha-L-glutamate ligase.